A 179-amino-acid polypeptide reads, in one-letter code: Large ribosomal subunit protein uL5c (179 aa).

This sequence belongs to the universal ribosomal protein uL5 family. As to quaternary structure, part of the 50S ribosomal subunit; contacts the 5S rRNA.

It localises to the plastid. Functionally, binds 5S rRNA, forms part of the central protuberance of the 50S subunit. The chain is Large ribosomal subunit protein uL5c (rpl5) from Euglena longa (Euglenophycean alga).